A 505-amino-acid polypeptide reads, in one-letter code: Annexin A11 (505 aa).

Composition is skewed to pro residues over residues 1–17 (MSYPGYPPPPGGYPPAA) and 99–160 (PVPP…PVPL). Disordered regions lie at residues 1–38 (MSYPGYPPPPGGYPPAAPGGGPWGGAAYPPPPSMPPIG) and 84–199 (PVPP…DAPG). The segment covering 161-177 (PGQQQPVPSYPGYPGSG) has biased composition (low complexity). 4 Annexin repeats span residues 200 to 271 (FDPL…ALMK), 272 to 343 (TPVL…SLSQ), 355 to 427 (SLAQ…AVVK), and 431 to 502 (NTPA…KICG). An N6-acetyllysine mark is found at K248 and K255. K479 is subject to N6-acetyllysine.

The protein belongs to the annexin family. As to quaternary structure, interacts with S100A6. Interacts with PDCD6 in a calcium-dependent manner. Interacts with KIF23 during cytokinesis.

It localises to the cytoplasm. The protein localises to the melanosome. The protein resides in the nucleus envelope. It is found in the nucleus. Its subcellular location is the nucleoplasm. It localises to the cytoskeleton. The protein localises to the spindle. In terms of biological role, binds specifically to calcyclin in a calcium-dependent manner. Required for midbody formation and completion of the terminal phase of cytokinesis. This chain is Annexin A11 (ANXA11), found in Homo sapiens (Human).